A 525-amino-acid chain; its full sequence is Neutrophil cytosol factor 2 (525 aa).

TPR repeat units lie at residues 37–70 (SRIC…DKHS), 71–104 (AVAY…LRGN), and 121–154 (CEVL…KSEP). Thr-233 carries the phosphothreonine modification. Residues 240 to 299 (LEGEAHRVLFGFVPETPEELQVMPGNIVFVLKKGSDNWATVMFNGQKGLVPCNYLEPVEL) enclose the SH3 1 domain. The tract at residues 304–343 (QSQPQEDTSPESDIPPPPNSSPPGRLQLSPGHKQKEPKEL) is disordered. Phosphoserine is present on residues Ser-324 and Ser-398. The PB1 domain maps to 350–428 (PYMLKVHYKY…YCLTLWCEHT (79 aa)). The segment at 437–457 (EPIQRENSDASKQTTEPQPKE) is disordered. In terms of domain architecture, SH3 2 spans 456–515 (KEGTQVVAIFSYEAAQPEDLEFVEGDVILVLSHVNEEWLEGECKGKVGIFPKAFVEGCAA).

This sequence belongs to the NCF2/NOXA1 family. In terms of assembly, component of the phagocyte NADPH oxidase complex composed of an obligatory core heterodimer formed by the membrane proteins CYBA and CYBB and the cytosolic regulatory subunits NCF1/p47-phox, NCF2/p67-phox, NCF4/p40-phox and the small GTPase RAC1 or RAC2. Part of a cytosolic complex composed at least by NCF1, NCF2 and NCF4. Interacts with NCF4. Interacts (via the C-terminal SH3 domain) with NCF1 (via C-terminus). Interacts with SYTL1 and RAC1. May interact with NOXO1. Interacts with S100A8 and calprotectin (S100A8/9). Interacts with GBP7 (via GB1/RHD3-type G domain). Interacts with CYBB; the interaction is enhanced in the presence of GBP7.

The protein localises to the cytoplasm. Its function is as follows. NCF2, NCF1, and a membrane bound cytochrome b558 are required for activation of the latent NADPH oxidase (necessary for superoxide production). Functionally, subunit of the phagocyte NADPH oxidase complex that mediates the transfer of electrons from cytosolic NADPH to O2 to produce the superoxide anion (O2(-)). In the activated complex, electrons are first transferred from NADPH to flavin adenine dinucleotide (FAD) and subsequently transferred via two heme molecules to molecular oxygen, producing superoxide through an outer-sphere reaction. Activation of the NADPH oxidase complex is initiated by the assembly of cytosolic subunits of the NADPH oxidase complex with the core NADPH oxidase complex to form a complex at the plasma membrane or phagosomal membrane. This activation process is initiated by phosphorylation dependent binding of the cytosolic NCF1/p47-phox subunit to the C-terminus of CYBA/p22-phox. This Mus musculus (Mouse) protein is Neutrophil cytosol factor 2.